We begin with the raw amino-acid sequence, 1165 residues long: Valine--tRNA ligase (1165 aa).

Positions 43–53 (PNVTGSLHMGH) match the 'HIGH' region motif. The 'KMSKS' region signature appears at 800-804 (KMSKT). K803 serves as a coordination point for ATP. Coiled coils occupy residues 1001–1032 (KNED…SDLQ) and 1097–1165 (HVDL…VLRS).

It belongs to the class-I aminoacyl-tRNA synthetase family. ValS type 1 subfamily. In terms of assembly, monomer.

It is found in the cytoplasm. It catalyses the reaction tRNA(Val) + L-valine + ATP = L-valyl-tRNA(Val) + AMP + diphosphate. Catalyzes the attachment of valine to tRNA(Val). As ValRS can inadvertently accommodate and process structurally similar amino acids such as threonine, to avoid such errors, it has a 'posttransfer' editing activity that hydrolyzes mischarged Thr-tRNA(Val) in a tRNA-dependent manner. The protein is Valine--tRNA ligase of Aquifex aeolicus (strain VF5).